We begin with the raw amino-acid sequence, 410 residues long: MNFDNLEREDEQIAHLVQKEKERQENSIELIASENFVSKAVMEAMGSYLTNKYAEGYPSKRYYGGCHVVDEVEDLARERVKKLFGAEHANVQPHSGSQANMAVYFSILEPGDTVLGMDLSHGGHLTHGSPVNFSGRLFNFVSYGVDKETETINYETVRELALKHKPKLIVAGASAYSRIIDFKTLREIADEVGAYLMVDIAHIAGLVATGLHPSPVPYADFVTSTTHKTLRGPRGGLILCKEKFAKALDKNIFPGIQGGPLMHIIAAKAVCFKEALEPSFKTYMEQVVKNAHVLAEALESYGFKLVSNGTDNHLILVDLTNKDITGKDAEILLDSIGITLNKNTVPNETRSPFVTSGVRIGTPAITTRGFKEEEMKEIASIINDAIKEKDGDLEPLKARVKALCAKYPLY.

Residues L119 and 123–125 (GHL) contribute to the (6S)-5,6,7,8-tetrahydrofolate site. K228 bears the N6-(pyridoxal phosphate)lysine mark. 351 to 353 (SPF) contributes to the (6S)-5,6,7,8-tetrahydrofolate binding site.

This sequence belongs to the SHMT family. In terms of assembly, homodimer. Pyridoxal 5'-phosphate is required as a cofactor.

The protein localises to the cytoplasm. The enzyme catalyses (6R)-5,10-methylene-5,6,7,8-tetrahydrofolate + glycine + H2O = (6S)-5,6,7,8-tetrahydrofolate + L-serine. It functions in the pathway one-carbon metabolism; tetrahydrofolate interconversion. The protein operates within amino-acid biosynthesis; glycine biosynthesis; glycine from L-serine: step 1/1. In terms of biological role, catalyzes the reversible interconversion of serine and glycine with tetrahydrofolate (THF) serving as the one-carbon carrier. This reaction serves as the major source of one-carbon groups required for the biosynthesis of purines, thymidylate, methionine, and other important biomolecules. Also exhibits THF-independent aldolase activity toward beta-hydroxyamino acids, producing glycine and aldehydes, via a retro-aldol mechanism. In Clostridium perfringens (strain ATCC 13124 / DSM 756 / JCM 1290 / NCIMB 6125 / NCTC 8237 / Type A), this protein is Serine hydroxymethyltransferase.